A 551-amino-acid chain; its full sequence is Medium/long-chain-fatty-acid--CoA/3-oxocholest-4-en-26-oate--CoA ligase (551 aa).

ATP contacts are provided by residues 172-180 (TGGTTGFPK), Asp-417, Arg-432, and Lys-523.

This sequence belongs to the ATP-dependent AMP-binding enzyme family.

It carries out the reaction a medium-chain fatty acid + ATP + CoA = a medium-chain fatty acyl-CoA + AMP + diphosphate. It catalyses the reaction a long-chain fatty acid + ATP + CoA = a long-chain fatty acyl-CoA + AMP + diphosphate. The enzyme catalyses (25S)-3-oxocholest-4-en-26-oate + ATP + CoA = (25S)-3-oxocholest-4-en-26-oyl-CoA + AMP + diphosphate. It participates in lipid metabolism; fatty acid biosynthesis. It functions in the pathway steroid metabolism; cholesterol metabolism. Functionally, plays an essential role in degradation of the side chains of C-24 branched-chain sterols. Not essential for degradation of straight chain sterols such as cholesterol. Catalyzes the activation of medium/long-chain fatty acids as acyl-coenzyme A (acyl-CoA), which are then transferred to the multifunctional polyketide synthase (PKS) type III for further chain extension. May be involved in the degradation of cholesterol via the degradation of the side chains of C-24 branched-chain sterols. In Mycolicibacterium smegmatis (strain ATCC 700084 / mc(2)155) (Mycobacterium smegmatis), this protein is Medium/long-chain-fatty-acid--CoA/3-oxocholest-4-en-26-oate--CoA ligase.